The sequence spans 225 residues: NAD(P)H-hydrate epimerase (225 aa).

One can recognise a YjeF N-terminal domain in the interval 9–209; that stretch reads MQTIDNYTVE…DIGLLTPQDF (201 aa). 57–61 is a binding site for (6S)-NADPHX; that stretch reads NNGAD. The K(+) site is built by asparagine 58 and aspartate 119. Residues 123-129 and aspartate 152 contribute to the (6S)-NADPHX site; that span reads GTGLNNL. Threonine 155 is a binding site for K(+).

The protein belongs to the NnrE/AIBP family. The cofactor is K(+).

It carries out the reaction (6R)-NADHX = (6S)-NADHX. It catalyses the reaction (6R)-NADPHX = (6S)-NADPHX. Catalyzes the epimerization of the S- and R-forms of NAD(P)HX, a damaged form of NAD(P)H that is a result of enzymatic or heat-dependent hydration. This is a prerequisite for the S-specific NAD(P)H-hydrate dehydratase to allow the repair of both epimers of NAD(P)HX. This Leuconostoc kimchii (strain IMSNU 11154 / KCTC 2386 / IH25) protein is NAD(P)H-hydrate epimerase.